A 50-amino-acid polypeptide reads, in one-letter code: Small, acid-soluble spore protein P (50 aa).

The segment at 1 to 50 is disordered; that stretch reads MSKRKMGPKQQKNPELPKSPEQPYGEPLSGSKKEKKANHSGQKHNPHHGL. Residues 33–50 show a composition bias toward basic residues; sequence KEKKANHSGQKHNPHHGL.

The protein belongs to the SspP family.

The protein resides in the spore core. The protein is Small, acid-soluble spore protein P of Oceanobacillus iheyensis (strain DSM 14371 / CIP 107618 / JCM 11309 / KCTC 3954 / HTE831).